We begin with the raw amino-acid sequence, 78 residues long: DNA-directed RNA polymerase subunit Rpo5 (78 aa).

Belongs to the archaeal Rpo5/eukaryotic RPB5 RNA polymerase subunit family. Part of the RNA polymerase complex.

It is found in the cytoplasm. It carries out the reaction RNA(n) + a ribonucleoside 5'-triphosphate = RNA(n+1) + diphosphate. In terms of biological role, DNA-dependent RNA polymerase (RNAP) catalyzes the transcription of DNA into RNA using the four ribonucleoside triphosphates as substrates. In Methanosarcina barkeri (strain Fusaro / DSM 804), this protein is DNA-directed RNA polymerase subunit Rpo5.